Reading from the N-terminus, the 217-residue chain is Flagellin B2 (217 aa).

Positions 1–12 (MKVFEFLKGKRG) are excised as a propeptide.

The protein belongs to the archaeal flagellin family.

It is found in the archaeal flagellum. Flagellin is the subunit protein which polymerizes to form the filaments of archaeal flagella. In Methanocaldococcus jannaschii (strain ATCC 43067 / DSM 2661 / JAL-1 / JCM 10045 / NBRC 100440) (Methanococcus jannaschii), this protein is Flagellin B2 (flaB2).